An 89-amino-acid polypeptide reads, in one-letter code: Small ribosomal subunit protein uS17 (89 aa).

It belongs to the universal ribosomal protein uS17 family. In terms of assembly, part of the 30S ribosomal subunit.

One of the primary rRNA binding proteins, it binds specifically to the 5'-end of 16S ribosomal RNA. The protein is Small ribosomal subunit protein uS17 of Verminephrobacter eiseniae (strain EF01-2).